The sequence spans 243 residues: ATP synthase subunit a (243 aa).

Helical transmembrane passes span 29–49 (NASL…YIGL), 54–74 (ILPN…VSTI), 89–109 (VFTI…PLGF), 114–134 (HIAV…AIGF), 144–164 (ILLP…IELF), 182–202 (IAGH…NIFL), and 208–228 (AFII…AYIF).

The protein belongs to the ATPase A chain family. As to quaternary structure, F-type ATPases have 2 components, CF(1) - the catalytic core - and CF(0) - the membrane proton channel. CF(1) has five subunits: alpha(3), beta(3), gamma(1), delta(1), epsilon(1). CF(0) has three main subunits: a(1), b(2) and c(9-12). The alpha and beta chains form an alternating ring which encloses part of the gamma chain. CF(1) is attached to CF(0) by a central stalk formed by the gamma and epsilon chains, while a peripheral stalk is formed by the delta and b chains.

The protein localises to the cell inner membrane. In terms of biological role, key component of the proton channel; it plays a direct role in the translocation of protons across the membrane. The sequence is that of ATP synthase subunit a from Ehrlichia chaffeensis (strain ATCC CRL-10679 / Arkansas).